A 938-amino-acid polypeptide reads, in one-letter code: Isoleucine--tRNA ligase (938 aa).

Residues Pro-58–His-68 carry the 'HIGH' region motif. An N6-acetyllysine modification is found at Lys-183. L-isoleucyl-5'-AMP is bound at residue Glu-561. Positions Lys-602–Ser-606 match the 'KMSKS' region motif. Lys-605 contributes to the ATP binding site. Positions 901, 904, 921, and 924 each coordinate Zn(2+).

It belongs to the class-I aminoacyl-tRNA synthetase family. IleS type 1 subfamily. In terms of assembly, monomer. Zn(2+) is required as a cofactor.

It localises to the cytoplasm. It catalyses the reaction tRNA(Ile) + L-isoleucine + ATP = L-isoleucyl-tRNA(Ile) + AMP + diphosphate. Catalyzes the attachment of isoleucine to tRNA(Ile). As IleRS can inadvertently accommodate and process structurally similar amino acids such as valine, to avoid such errors it has two additional distinct tRNA(Ile)-dependent editing activities. One activity is designated as 'pretransfer' editing and involves the hydrolysis of activated Val-AMP. The other activity is designated 'posttransfer' editing and involves deacylation of mischarged Val-tRNA(Ile). This chain is Isoleucine--tRNA ligase, found in Escherichia coli O17:K52:H18 (strain UMN026 / ExPEC).